The following is a 250-amino-acid chain: Thioesterase FPSE_09186 (250 aa).

Belongs to the AMT4 thioesterase family.

The protein operates within secondary metabolite biosynthesis. Its function is as follows. Thioesterase; part of the gene cluster that mediates the biosynthesis of the lipopeptides W493 A and B. W493 A and B consist of six amino acid residues D-allo-thr, L-Ala, D-Ala, L-Gln, D-Tyr, and L-Val/L-Ile linked to a 3-hydroxy-4-methyltetradecanoic acid polyketide chain. The biosynthesis starts with formation of the linear polyketide chain by the highly reducing polyketide synthase PKS40. The gene cluster contains a putative acyl-CoA ligase (FPSE_09184) for formation of a CoA thioester polyketide. The thiol bond could be hydrolyzed by the putative thioesterase (FPSE_09186) and then accepted by the first T domain in module 1 of NRPS32. The second T domain is responsible for accepting a threonine, which is adenylated by the A domain and epimerized to the D-allo-threonine formed by the E domain. The five successive modules incorporate Ala, Ala, Gln, Tyr, and Val/Ile into the final product, which is released by cyclization. The protein is Thioesterase FPSE_09186 of Fusarium pseudograminearum (strain CS3096) (Wheat and barley crown-rot fungus).